Reading from the N-terminus, the 167-residue chain is Large ribosomal subunit protein uL10 (167 aa).

Belongs to the universal ribosomal protein uL10 family. Part of the ribosomal stalk of the 50S ribosomal subunit. The N-terminus interacts with L11 and the large rRNA to form the base of the stalk. The C-terminus forms an elongated spine to which L12 dimers bind in a sequential fashion forming a multimeric L10(L12)X complex.

In terms of biological role, forms part of the ribosomal stalk, playing a central role in the interaction of the ribosome with GTP-bound translation factors. The chain is Large ribosomal subunit protein uL10 from Erwinia tasmaniensis (strain DSM 17950 / CFBP 7177 / CIP 109463 / NCPPB 4357 / Et1/99).